A 444-amino-acid polypeptide reads, in one-letter code: UPF0761 membrane protein RC1_0578 (444 aa).

The next 6 helical transmembrane spans lie at 49–69 (LLAL…FPAY), 103–123 (AAAL…LLFF), 145–165 (LLSF…SLSV), 186–206 (FMLP…MIPN), 219–239 (IAAA…IAAF), and 248–268 (ALSV…VVLF). The tract at residues 423 to 444 (SGQPSGQVETAVRQRTGLQGRI) is disordered.

It belongs to the UPF0761 family.

Its subcellular location is the cell inner membrane. This Rhodospirillum centenum (strain ATCC 51521 / SW) protein is UPF0761 membrane protein RC1_0578.